The primary structure comprises 309 residues: Ecto-ADP-ribosyltransferase 5 (309 aa).

An N-terminal signal peptide occupies residues 1 to 23 (MILEDLLMVLSCLSLHALWKVRA). C43 and C259 are disulfide-bonded. The 191-residue stretch at 63-253 (ALLRESWEAA…IVTLWSYDQT (191 aa)) folds into the TR mART core domain. NAD(+) is bound at residue Y100. N102 is a glycosylation site (N-linked (GlcNAc...) asparagine). NAD(+)-binding residues include R161 and Q181. The active site involves R161. S184 is an active-site residue. N197 carries N-linked (GlcNAc...) asparagine glycosylation. S215 is a binding site for NAD(+). E222 is a catalytic residue.

This sequence belongs to the Arg-specific ADP-ribosyltransferase family. As to expression, abundantly expressed in testis. Lower levels in cardiac and skeletal muscle.

The protein localises to the secreted. It is found in the membrane. The catalysed reaction is L-arginyl-[protein] + NAD(+) = N(omega)-(ADP-D-ribosyl)-L-arginyl-[protein] + nicotinamide + H(+). The protein is Ecto-ADP-ribosyltransferase 5 (Art5) of Mus musculus (Mouse).